The sequence spans 495 residues: MTVMSIQDNLTINEKKVLLALEELRSAVPDKLEEKSGLQIDAAMQAAFMLQEKELASVSEKVLERYSLTKEGEEYKKTGLPERQIIDALKNPVSLEELRSCFSPQTVGIATGWLVKKGWAKVENGIMVPSGEASEGKDEKALSAFAGKAKTLEELGADEGTVKDLLKRKLVVKHEEKFRTVSITDAGSELASQGLVLEEEIAQLTPELLKSGAWKEKKFRPYRLDITPKPLYGTKIHPYRRLIEQMRQIFLEMGFTEIKGGIIQSSFWNFDALFQPQDHPARDMQDTFHLGSTCQIPAEYSGKVAAMHENGGDIDSCGWGGIWDRELAGRNVLRTHTTSVTIKYLADNPEPPVKAFCIDRAYRRETIDPTHTPEFEQLEGVVMDKDMSFADLLGLLAEFYHRMGFEEVRFRPGYFPYTEPSVEPEVYVDGLGWVELGGAGVFRKEVTEPLGIKAPVLAWGLGVSRLAMLKLGLKDLRLLYQSDIDWLRKSEVCKI.

L-phenylalanine-binding positions include Thr338, 377 to 379 (QLE), and Tyr417. Residue Glu419 coordinates Mg(2+). Phe442 contributes to the L-phenylalanine binding site.

Belongs to the class-II aminoacyl-tRNA synthetase family. Phe-tRNA synthetase alpha subunit type 2 subfamily. As to quaternary structure, tetramer of two alpha and two beta subunits. The cofactor is Mg(2+).

The protein resides in the cytoplasm. The enzyme catalyses tRNA(Phe) + L-phenylalanine + ATP = L-phenylalanyl-tRNA(Phe) + AMP + diphosphate + H(+). This Methanosarcina mazei (strain ATCC BAA-159 / DSM 3647 / Goe1 / Go1 / JCM 11833 / OCM 88) (Methanosarcina frisia) protein is Phenylalanine--tRNA ligase alpha subunit.